We begin with the raw amino-acid sequence, 214 residues long: 3-isopropylmalate dehydratase small subunit (214 aa).

This sequence belongs to the LeuD family. LeuD type 1 subfamily. Heterodimer of LeuC and LeuD.

The catalysed reaction is (2R,3S)-3-isopropylmalate = (2S)-2-isopropylmalate. Its pathway is amino-acid biosynthesis; L-leucine biosynthesis; L-leucine from 3-methyl-2-oxobutanoate: step 2/4. Catalyzes the isomerization between 2-isopropylmalate and 3-isopropylmalate, via the formation of 2-isopropylmaleate. This Desulforapulum autotrophicum (strain ATCC 43914 / DSM 3382 / VKM B-1955 / HRM2) (Desulfobacterium autotrophicum) protein is 3-isopropylmalate dehydratase small subunit.